The sequence spans 660 residues: MKTVVFAYHDMGCLGIEALLAAGYEISAIFTHTDNPGEKAFYGSVAHLAAERDIPVYAPDNVNHPLWVERIAQLSPEVIFSFYYRHLICDEIFQLAPAGAFNLHGSLLPKYRGRAPLNWVLVNGETETGVTLHRMVKRADAGAIVAQLRVAIAPDDIAITLHHKLCHAARQLLEQTLPAIKHGNILEIAQRENEATCFGRRTPDDSFLEWHKPASVLHNMVRAVADPWPGAFSYVGNQKFTVWSSRVHPHASKAQPGSVISVAPLLIACGDGALEIVTGQAGDGITMQGSQLAQMLGLVQGSRLNSQPACTARRRTRVLILGVNGFIGNHLTERLLREDHYEVYGLDIGSDAISRFLNHPHFHFVEGDISIHSEWIEYHVKKCDVVLPLVAIATPIEYTRNPLRVFELDFEENLRIIRYCVKYRKRIIFPSTSEVYGMCSDKYFDEDHSNLIVGPVNKPRWIYSVSKQLLDRVIWAYGEKEGLQFTLFLPFNWMGPRLDNLNAARIGSSRAITQLILNLVEGSPIKLIDGGKQKRCFTDIRDGIEALYRIIENAGNRCDGEIINIGNPENEASIEELGEMLLASFEKHPLRHHFPPFAGFRVVESSCYYGKGYQDVEHRKPSIRNAHRCLDWEPKIDMQETIDETLDFFLRTVDLTDKPS.

The interval 1-304 (MKTVVFAYHD…MLGLVQGSRL (304 aa)) is formyltransferase ArnAFT. 86 to 88 (HLI) provides a ligand contact to (6R)-10-formyltetrahydrofolate. His-104 (proton donor; for formyltransferase activity) is an active-site residue. Residues Arg-114 and 136–140 (VKRAD) contribute to the (6R)-10-formyltetrahydrofolate site. Residues 314-660 (RRTRVLILGV…RTVDLTDKPS (347 aa)) are dehydrogenase ArnADH. NAD(+) contacts are provided by residues Asp-347 and 368–369 (DI). UDP-alpha-D-glucuronate is bound by residues Ala-393, Tyr-398, and 432–433 (TS). The Proton acceptor; for decarboxylase activity role is filled by Glu-434. UDP-alpha-D-glucuronate is bound by residues Arg-460, Asn-492, 526-535 (KLIDGGKQKR), and Tyr-613. Arg-619 acts as the Proton donor; for decarboxylase activity in catalysis.

In the N-terminal section; belongs to the Fmt family. UDP-L-Ara4N formyltransferase subfamily. The protein in the C-terminal section; belongs to the NAD(P)-dependent epimerase/dehydratase family. UDP-glucuronic acid decarboxylase subfamily. As to quaternary structure, homohexamer, formed by a dimer of trimers.

The enzyme catalyses UDP-alpha-D-glucuronate + NAD(+) = UDP-beta-L-threo-pentopyranos-4-ulose + CO2 + NADH. It carries out the reaction UDP-4-amino-4-deoxy-beta-L-arabinose + (6R)-10-formyltetrahydrofolate = UDP-4-deoxy-4-formamido-beta-L-arabinose + (6S)-5,6,7,8-tetrahydrofolate + H(+). It functions in the pathway nucleotide-sugar biosynthesis; UDP-4-deoxy-4-formamido-beta-L-arabinose biosynthesis; UDP-4-deoxy-4-formamido-beta-L-arabinose from UDP-alpha-D-glucuronate: step 1/3. The protein operates within nucleotide-sugar biosynthesis; UDP-4-deoxy-4-formamido-beta-L-arabinose biosynthesis; UDP-4-deoxy-4-formamido-beta-L-arabinose from UDP-alpha-D-glucuronate: step 3/3. Its pathway is bacterial outer membrane biogenesis; lipopolysaccharide biosynthesis. Functionally, bifunctional enzyme that catalyzes the oxidative decarboxylation of UDP-glucuronic acid (UDP-GlcUA) to UDP-4-keto-arabinose (UDP-Ara4O) and the addition of a formyl group to UDP-4-amino-4-deoxy-L-arabinose (UDP-L-Ara4N) to form UDP-L-4-formamido-arabinose (UDP-L-Ara4FN). The modified arabinose is attached to lipid A and is required for resistance to polymyxin and cationic antimicrobial peptides. This Shigella flexneri serotype 5b (strain 8401) protein is Bifunctional polymyxin resistance protein ArnA.